The sequence spans 163 residues: Calcium-binding protein 2 (163 aa).

Residue glycine 2 is the site of N-myristoyl glycine attachment. 4 EF-hand domains span residues 21-56, 72-89, 95-130, and 132-163; these read EEIE…LGYM, GKVD…KLLA, IGVR…LLGE, and LSQR…MMSR. 5 residues coordinate Ca(2+): aspartate 34, aspartate 36, aspartate 38, tyrosine 40, and glutamate 45. 9 residues coordinate Ca(2+): aspartate 108, asparagine 110, aspartate 112, cysteine 114, glutamate 119, aspartate 145, asparagine 147, aspartate 149, and glutamate 156.

It localises to the cytoplasm. Its subcellular location is the perinuclear region. The protein localises to the cell membrane. It is found in the golgi apparatus. Its function is as follows. Required for sound encoding at inner hair cells (IHCs) synapses, likely via inhibition of the inactivation of voltage-gated calcium channel of type 1.3 (Cav1.3) in the IHCs. Required for the normal transfer of light signals through the retina. This chain is Calcium-binding protein 2 (CABP2), found in Bos taurus (Bovine).